The sequence spans 750 residues: MIIRSPEPEVKILVDRDPIKTSFEEWAKPGHFSRTIAKGPDTTTWIWNLHADAHDFDSHTSDLEEISRKVFSAHFGQLSIIFLWLSGMYFHGARFSNYEAWLSDPTHIGPSAQVVWPIVGQEILNGDVGGGFRGIQITSGFFQIWRASGITSELQLYCTAIGALVFAALMLFAGWFHYHKAAPKLAWFQDVESMLNHHLAGLLGLGSLSWAGHQVHVSLPINQFLNAGVDPKEIPLPHEFILNRDLLAQLYPSFSEGATPFFTLNWSKYSEFLTFRGGLDPVTGGLWLTDIAHHHLAIAILFLIAGHMYRTNWGIGHGLKDILEAHKGPFTGQGHKGLYEILTTSWHAQLSLNLAMLGSLTIVVAHHMYSMPPYPYLATDYATQLSLFTHHMWIGGFLIVGAAAHAAIFMVRDYDPTNRYNDLLDRVLRHRDAIISHLNWVCIFLGFHSFGLYIHNDTMSALGRPQDMFSDTAIQLQPVFAQWIQNTHALAPGVTAPGETASTSLTWGGGELVAVGGKVALLPIPLGTADFLVHHIHAFTIHVTVLILLKGVLFARSSRLIPDKANLGFRFPCDGPGRGGTCQVSAWDHVFLGLFWMYNAISVVIFHFSWKMQSDVWGSISDQGVVTHITGGNFAQSSITINGWLRDFLWAQASQVIQSYGSSLSAYGLFFLGAHFVWAFSLMFLFSGRGYWQELIESIVWAHNKLKVAPATQPRALSIVQGRAVGVTHYLLGGIATTWAFFLARIIAVG.

The next 8 membrane-spanning stretches (helical) occupy residues 70 to 93 (VFSA…FHGA), 156 to 179 (LYCT…FHYH), 195 to 219 (LNHH…HVSL), 291 to 309 (IAHH…GHMY), 346 to 369 (WHAQ…HHMY), 385 to 411 (LSLF…IFMV), 433 to 455 (AIIS…LYIH), and 531 to 549 (FLVH…LILL). [4Fe-4S] cluster is bound by residues cysteine 573 and cysteine 582. 2 helical membrane passes run 589-610 (HVFL…HFSW) and 664-686 (LSAY…MFLF). Histidine 675 contributes to the chlorophyll a' binding site. Chlorophyll a contacts are provided by methionine 683 and tyrosine 691. Tryptophan 692 lines the phylloquinone pocket. A helical membrane pass occupies residues 724–744 (AVGVTHYLLGGIATTWAFFLA).

This sequence belongs to the PsaA/PsaB family. The PsaA/B heterodimer binds the P700 chlorophyll special pair and subsequent electron acceptors. PSI consists of a core antenna complex that captures photons, and an electron transfer chain that converts photonic excitation into a charge separation. The eukaryotic PSI reaction center is composed of at least 11 subunits. P700 is a chlorophyll a/chlorophyll a' dimer, A0 is one or more chlorophyll a, A1 is one or both phylloquinones and FX is a shared 4Fe-4S iron-sulfur center. is required as a cofactor.

The protein resides in the plastid. It is found in the chloroplast thylakoid membrane. It catalyses the reaction reduced [plastocyanin] + hnu + oxidized [2Fe-2S]-[ferredoxin] = oxidized [plastocyanin] + reduced [2Fe-2S]-[ferredoxin]. Functionally, psaA and PsaB bind P700, the primary electron donor of photosystem I (PSI), as well as the electron acceptors A0, A1 and FX. PSI is a plastocyanin-ferredoxin oxidoreductase, converting photonic excitation into a charge separation, which transfers an electron from the donor P700 chlorophyll pair to the spectroscopically characterized acceptors A0, A1, FX, FA and FB in turn. Oxidized P700 is reduced on the lumenal side of the thylakoid membrane by plastocyanin. The polypeptide is Photosystem I P700 chlorophyll a apoprotein A1 (Lobularia maritima (Sweet alyssum)).